The sequence spans 792 residues: Phenylalanine--tRNA ligase beta subunit (792 aa).

The tRNA-binding domain maps to 39-147 (AAAFSGVVVG…DNAPIGQDIR (109 aa)). The 76-residue stretch at 400 to 475 (PERPAVRLRP…RLHGYDAIPA (76 aa)) folds into the B5 domain. 4 residues coordinate Mg(2+): aspartate 453, aspartate 459, glutamate 462, and glutamate 463. The FDX-ACB domain occupies 698–791 (SRQPAVTRDV…TETSLGARLR (94 aa)).

The protein belongs to the phenylalanyl-tRNA synthetase beta subunit family. Type 1 subfamily. As to quaternary structure, tetramer of two alpha and two beta subunits. Mg(2+) serves as cofactor.

It localises to the cytoplasm. It carries out the reaction tRNA(Phe) + L-phenylalanine + ATP = L-phenylalanyl-tRNA(Phe) + AMP + diphosphate + H(+). This Aromatoleum aromaticum (strain DSM 19018 / LMG 30748 / EbN1) (Azoarcus sp. (strain EbN1)) protein is Phenylalanine--tRNA ligase beta subunit.